Consider the following 392-residue polypeptide: Methylthioribose-1-phosphate isomerase (392 aa).

Asp-268 (proton donor) is an active-site residue.

This sequence belongs to the eIF-2B alpha/beta/delta subunits family. MtnA subfamily.

The protein localises to the cytoplasm. It localises to the nucleus. The catalysed reaction is 5-(methylsulfanyl)-alpha-D-ribose 1-phosphate = 5-(methylsulfanyl)-D-ribulose 1-phosphate. It functions in the pathway amino-acid biosynthesis; L-methionine biosynthesis via salvage pathway; L-methionine from S-methyl-5-thio-alpha-D-ribose 1-phosphate: step 1/6. Catalyzes the interconversion of methylthioribose-1-phosphate (MTR-1-P) into methylthioribulose-1-phosphate (MTRu-1-P). This Ajellomyces capsulatus (strain G186AR / H82 / ATCC MYA-2454 / RMSCC 2432) (Darling's disease fungus) protein is Methylthioribose-1-phosphate isomerase.